A 257-amino-acid polypeptide reads, in one-letter code: 3-deoxy-manno-octulosonate cytidylyltransferase (257 aa).

This sequence belongs to the KdsB family.

Its subcellular location is the cytoplasm. The catalysed reaction is 3-deoxy-alpha-D-manno-oct-2-ulosonate + CTP = CMP-3-deoxy-beta-D-manno-octulosonate + diphosphate. The protein operates within nucleotide-sugar biosynthesis; CMP-3-deoxy-D-manno-octulosonate biosynthesis; CMP-3-deoxy-D-manno-octulosonate from 3-deoxy-D-manno-octulosonate and CTP: step 1/1. It participates in bacterial outer membrane biogenesis; lipopolysaccharide biosynthesis. Activates KDO (a required 8-carbon sugar) for incorporation into bacterial lipopolysaccharide in Gram-negative bacteria. The chain is 3-deoxy-manno-octulosonate cytidylyltransferase from Xylella fastidiosa (strain 9a5c).